We begin with the raw amino-acid sequence, 81 residues long: RNA-binding protein Hfq (81 aa).

The region spanning 11–71 (DIFLNSARKN…VSTITPLRPI (61 aa)) is the Sm domain.

This sequence belongs to the Hfq family. In terms of assembly, homohexamer.

Functionally, RNA chaperone that binds small regulatory RNA (sRNAs) and mRNAs to facilitate mRNA translational regulation in response to envelope stress, environmental stress and changes in metabolite concentrations. Also binds with high specificity to tRNAs. This is RNA-binding protein Hfq from Clostridium acetobutylicum (strain ATCC 824 / DSM 792 / JCM 1419 / IAM 19013 / LMG 5710 / NBRC 13948 / NRRL B-527 / VKM B-1787 / 2291 / W).